A 282-amino-acid chain; its full sequence is Undecaprenyl-diphosphatase (282 aa).

8 consecutive transmembrane segments (helical) span residues 7–29 (VLFA…HVVI), 45–65 (FLPF…LYFW), 89–109 (GLLL…FALK), 115–135 (LFAS…VLII), 153–173 (LTLR…LPGL), 196–216 (FAFL…VPHL), 229–249 (TALL…AFLM), and 258–278 (WALG…LILI).

This sequence belongs to the UppP family.

It is found in the cell inner membrane. It carries out the reaction di-trans,octa-cis-undecaprenyl diphosphate + H2O = di-trans,octa-cis-undecaprenyl phosphate + phosphate + H(+). In terms of biological role, catalyzes the dephosphorylation of undecaprenyl diphosphate (UPP). Confers resistance to bacitracin. This Acidiphilium cryptum (strain JF-5) protein is Undecaprenyl-diphosphatase.